The primary structure comprises 80 residues: MTRLVKALVIAYQRFFSARRPYRVCRFEPTCSEYMLQAIDRYHSRGILMGLARILRCQPFARGGYDPLPDHFTLKRNQPK.

Belongs to the UPF0161 family.

The protein resides in the cell membrane. Could be involved in insertion of integral membrane proteins into the membrane. This Limosilactobacillus fermentum (strain NBRC 3956 / LMG 18251) (Lactobacillus fermentum) protein is Putative membrane protein insertion efficiency factor.